A 244-amino-acid chain; its full sequence is NH(3)-dependent NAD(+) synthetase (244 aa).

Residue 29–36 coordinates ATP; that stretch reads GISGGIDS. Asp-35 contacts Mg(2+). Arg-113 contacts deamido-NAD(+). Residue Thr-133 coordinates ATP. Glu-138 is a Mg(2+) binding site. Residues Lys-146 and Asp-153 each contribute to the deamido-NAD(+) site. ATP-binding residues include Lys-162 and Thr-184. Residue 230–231 coordinates deamido-NAD(+); it reads HK.

It belongs to the NAD synthetase family. As to quaternary structure, homodimer.

It carries out the reaction deamido-NAD(+) + NH4(+) + ATP = AMP + diphosphate + NAD(+) + H(+). It participates in cofactor biosynthesis; NAD(+) biosynthesis; NAD(+) from deamido-NAD(+) (ammonia route): step 1/1. Functionally, catalyzes the ATP-dependent amidation of deamido-NAD to form NAD. Uses ammonia as a nitrogen source. The chain is NH(3)-dependent NAD(+) synthetase from Mesoplasma florum (strain ATCC 33453 / NBRC 100688 / NCTC 11704 / L1) (Acholeplasma florum).